The sequence spans 349 residues: Glycosyltransferase 8 domain-containing protein 2 (349 aa).

The Cytoplasmic segment spans residues 1 to 6 (MAFLRK). The helical; Signal-anchor for type II membrane protein transmembrane segment at 7–24 (VNQVLLLLLVLTLCGILY) threads the bilayer. Residues 25–349 (KKVHKGAVLK…AGIFKLHHNR (325 aa)) are Lumenal-facing. Asparagine 234 carries N-linked (GlcNAc...) asparagine glycosylation.

It belongs to the glycosyltransferase 8 family.

The protein resides in the membrane. This Mus musculus (Mouse) protein is Glycosyltransferase 8 domain-containing protein 2 (Glt8d2).